The sequence spans 1613 residues: Vitellogenin-2 (1613 aa).

Positions 1–15 are cleaved as a signal peptide; sequence MRSIIIASLVALALA. The region spanning 24-687 is the Vitellogenin domain; sequence FEPKTDYHYK…EKNSFLPKDL (664 aa). Asn1268 carries an N-linked (GlcNAc...) asparagine glycan. The 170-residue stretch at 1308–1477 folds into the VWFD domain; sequence SVCKVQKNQI…SYLLKNEECE (170 aa). Disulfide bonds link Cys1310-Cys1440 and Cys1332-Cys1476. The disordered stretch occupies residues 1491–1531; the sequence is KYERDEEQSDEYSSEETYDYEQENTKKSQKNQRSQKKSDLV. A compositionally biased stretch (acidic residues) spans 1495-1512; it reads DEEQSDEYSSEETYDYEQ.

In terms of tissue distribution, expressed in the intestine of adult hermaphrodites.

The protein resides in the secreted. Precursor of the egg-yolk proteins that are sources of nutrients during embryonic development. Together with other vitellogenins, may play a role in modulating life-span, acting via induction of autophagy and lysosomal lipolysis. In Caenorhabditis elegans, this protein is Vitellogenin-2 (vit-2).